Reading from the N-terminus, the 132-residue chain is Small ribosomal subunit protein uS8 (132 aa).

The protein belongs to the universal ribosomal protein uS8 family. As to quaternary structure, part of the 30S ribosomal subunit. Contacts proteins S5 and S12.

One of the primary rRNA binding proteins, it binds directly to 16S rRNA central domain where it helps coordinate assembly of the platform of the 30S subunit. The protein is Small ribosomal subunit protein uS8 of Rickettsia canadensis (strain McKiel).